Consider the following 257-residue polypeptide: Thiazole synthase (257 aa).

The active-site Schiff-base intermediate with DXP is the lysine 97. 1-deoxy-D-xylulose 5-phosphate-binding positions include glycine 158, 184 to 185, and 206 to 207; these read AG and NT.

Belongs to the ThiG family. In terms of assembly, homotetramer. Forms heterodimers with either ThiH or ThiS.

The protein localises to the cytoplasm. The enzyme catalyses [ThiS sulfur-carrier protein]-C-terminal-Gly-aminoethanethioate + 2-iminoacetate + 1-deoxy-D-xylulose 5-phosphate = [ThiS sulfur-carrier protein]-C-terminal Gly-Gly + 2-[(2R,5Z)-2-carboxy-4-methylthiazol-5(2H)-ylidene]ethyl phosphate + 2 H2O + H(+). The protein operates within cofactor biosynthesis; thiamine diphosphate biosynthesis. Functionally, catalyzes the rearrangement of 1-deoxy-D-xylulose 5-phosphate (DXP) to produce the thiazole phosphate moiety of thiamine. Sulfur is provided by the thiocarboxylate moiety of the carrier protein ThiS. In vitro, sulfur can be provided by H(2)S. This chain is Thiazole synthase, found in Phocaeicola vulgatus (strain ATCC 8482 / DSM 1447 / JCM 5826 / CCUG 4940 / NBRC 14291 / NCTC 11154) (Bacteroides vulgatus).